The sequence spans 229 residues: Secretory carrier-associated membrane protein 4 (229 aa).

Topologically, residues 1-39 are cytoplasmic; the sequence is MSEKENNFPPLPKFIPVKPCFYQNFSDEIPVEHQVLVKR. Transmembrane regions (helical) follow at residues 40–60, 61–81, 105–125, and 149–169; these read IYRL…ACLA, WWIG…LLLF, FMAF…QAIG, and VVML…AIAI. Residues 170–229 lie on the Cytoplasmic side of the membrane; that stretch reads MKVHRIYRGAGGSFQKAQTEWNTGTWRNPPSREAQYNNFSGNSLPEYPTVPSYPGSGQWP. T194 is subject to Phosphothreonine. Positions 208-229 are disordered; that stretch reads FSGNSLPEYPTVPSYPGSGQWP.

It belongs to the SCAMP family.

It is found in the membrane. Probably involved in membrane protein trafficking. The polypeptide is Secretory carrier-associated membrane protein 4 (SCAMP4) (Pongo abelii (Sumatran orangutan)).